The sequence spans 1460 residues: Ankyrin repeat-containing protein kinase A (1460 aa).

7 disordered regions span residues 1–32, 57–181, 216–259, 272–311, 329–354, 374–510, and 551–608; these read MSIK…NINI, IKQQ…HKSH, RENE…ASST, STSN…VEFD, SSPS…TSTS, FTPS…SSNP, and CPSA…SSIP. 3 stretches are compositionally biased toward low complexity: residues 8–32, 61–86, and 111–128; these read SNIN…NINI, SNNN…PTSH, and SSGS…NNNN. Residues 129–140 are compositionally biased toward polar residues; the sequence is QIKTSNGMNKPN. The span at 149–162 shows a compositional bias: basic and acidic residues; the sequence is KPRENSQNKIDDNK. 2 stretches are compositionally biased toward low complexity: residues 220 to 259 and 272 to 300; these read NNNN…ASST and STSN…RSTS. Polar residues-rich tracts occupy residues 329–345 and 384–404; these read SSPS…VHMP and PTNS…TIQP. The span at 405-422 shows a compositional bias: low complexity; that stretch reads SSLDSSSESVSDGLQSVS. A compositionally biased stretch (polar residues) spans 423–434; sequence GSPVTASPSPTI. Residues 435–461 show a composition bias toward low complexity; it reads SNNTNATTTNNNNNTNTNNNNNNNNNQ. The span at 462-472 shows a compositional bias: basic residues; sequence HNHHHHQHSHS. The segment at 467 to 667 is interaction with 14-3-3 protein; sequence HQHSHSQQHD…IFRGCGIPLD (201 aa). The segment covering 486–497 has biased composition (low complexity); that stretch reads PSSPTSPTLLPS. The Phorbol-ester/DAG-type zinc finger occupies 499-551; sequence THDFSSEYSSNPGGKCAICRKPLWSFPISDKSRRCRDCSLVVHRACVPLATEC. Over residues 559-568 the composition is skewed to polar residues; that stretch reads SKLSVPNGNQ. The span at 569–608 shows a compositional bias: low complexity; it reads SNSSSSSSSSSSSSSSSNSSSSNTKGHSRTPSSPSVSSIP. A GRAM domain is found at 653–724; that stretch reads RDFHFIFRGC…SNIASIEKRS (72 aa). 5 ANK repeats span residues 814–843, 852–883, 887–920, 924–955, and 959–988; these read SKEI…QVNS, KGYT…RVRE, DGNT…NINE, NGET…NVNI, and AGES…DPTI. The region spanning 1112–1375 is the Protein kinase domain; sequence LEYTEKIGSG…ATEAMTALAV (264 aa). ATP-binding positions include 1118 to 1126 and Lys1139; that span reads IGSGASGKV. Asp1231 serves as the catalytic Proton acceptor. Residues 1293–1313 traverse the membrane as a helical segment; that stretch reads MGIVMWEIVYCVVYGCYMIPY. A coiled-coil region spans residues 1425–1460; it reads PEEEQIYQEAMEKQRRNQEASANRNQKNKELLNNNN. The segment at 1434 to 1460 is disordered; that stretch reads AMEKQRRNQEASANRNQKNKELLNNNN.

The protein belongs to the protein kinase superfamily. TKL Ser/Thr protein kinase family.

The protein localises to the cytoplasm. The protein resides in the cytoskeleton. It is found in the membrane. Its subcellular location is the nucleus. It carries out the reaction L-seryl-[protein] + ATP = O-phospho-L-seryl-[protein] + ADP + H(+). The enzyme catalyses L-threonyl-[protein] + ATP = O-phospho-L-threonyl-[protein] + ADP + H(+). Functionally, involved in the development of the fruiting body. Overexpression phenocopies the spnA null phenotype. In Dictyostelium discoideum (Social amoeba), this protein is Ankyrin repeat-containing protein kinase A (arkA).